Here is a 439-residue protein sequence, read N- to C-terminus: Methylenetetrahydrofolate--tRNA-(uracil-5-)-methyltransferase TrmFO (439 aa).

8–13 (GAGLAG) provides a ligand contact to FAD.

This sequence belongs to the MnmG family. TrmFO subfamily. It depends on FAD as a cofactor.

The protein localises to the cytoplasm. It carries out the reaction uridine(54) in tRNA + (6R)-5,10-methylene-5,6,7,8-tetrahydrofolate + NADH + H(+) = 5-methyluridine(54) in tRNA + (6S)-5,6,7,8-tetrahydrofolate + NAD(+). It catalyses the reaction uridine(54) in tRNA + (6R)-5,10-methylene-5,6,7,8-tetrahydrofolate + NADPH + H(+) = 5-methyluridine(54) in tRNA + (6S)-5,6,7,8-tetrahydrofolate + NADP(+). Its function is as follows. Catalyzes the folate-dependent formation of 5-methyl-uridine at position 54 (M-5-U54) in all tRNAs. The sequence is that of Methylenetetrahydrofolate--tRNA-(uracil-5-)-methyltransferase TrmFO from Magnetococcus marinus (strain ATCC BAA-1437 / JCM 17883 / MC-1).